The chain runs to 155 residues: uncharacterized protein (155 aa).

The next 4 helical transmembrane spans lie at 25–45 (LPMGFIGITLFEIGILLFGWT), 50–70 (IFWFVPTIGSAIMGGGYIMTS), 91–111 (GVKIFQLLLGAIFPLFAESLF), and 118–138 (WGCTLLAFILLACGCSLPILF).

Belongs to the major facilitator superfamily. CAR1 family.

The protein resides in the membrane. This is an uncharacterized protein from Schizosaccharomyces pombe (strain 972 / ATCC 24843) (Fission yeast).